Reading from the N-terminus, the 548-residue chain is Membrane protein insertase YidC (548 aa).

Residues 6–26 (NLLVIALLFVSFMIWQAWEQD) traverse the membrane as a helical segment. Positions 28 to 56 (NPQPQTQQTTQTTTTAAGSAADQGVPASG) are disordered. Over residues 29–42 (PQPQTQQTTQTTTT) the composition is skewed to low complexity. 4 helical membrane passes run 350-370 (FVGN…GIMY), 424-444 (FPLI…MGSI), 458-478 (LSAQ…MFFI), and 499-519 (PVIF…YYIV).

This sequence belongs to the OXA1/ALB3/YidC family. Type 1 subfamily. In terms of assembly, interacts with the Sec translocase complex via SecD. Specifically interacts with transmembrane segments of nascent integral membrane proteins during membrane integration.

The protein resides in the cell inner membrane. In terms of biological role, required for the insertion and/or proper folding and/or complex formation of integral membrane proteins into the membrane. Involved in integration of membrane proteins that insert both dependently and independently of the Sec translocase complex, as well as at least some lipoproteins. Aids folding of multispanning membrane proteins. In Salmonella newport (strain SL254), this protein is Membrane protein insertase YidC.